A 711-amino-acid polypeptide reads, in one-letter code: Polyribonucleotide nucleotidyltransferase (711 aa).

Mg(2+)-binding residues include Asp486 and Asp492. Residues 553-612 (PRIHTIKISPDKIKDVIGKGGSVIRALTEETGTTIEIEDDGTVKIAATDGEKAKFAIRRI) form the KH domain. The S1 motif domain maps to 622–690 (GRIYNGKVTR…RQGRVRLSIK (69 aa)). A disordered region spans residues 690 to 711 (KEATEQTQPAAAPEAPAAEQGE). Low complexity predominate over residues 694 to 711 (EQTQPAAAPEAPAAEQGE).

The protein belongs to the polyribonucleotide nucleotidyltransferase family. In terms of assembly, component of the RNA degradosome, which is a multiprotein complex involved in RNA processing and mRNA degradation. Requires Mg(2+) as cofactor.

It is found in the cytoplasm. The enzyme catalyses RNA(n+1) + phosphate = RNA(n) + a ribonucleoside 5'-diphosphate. Functionally, involved in mRNA degradation. Catalyzes the phosphorolysis of single-stranded polyribonucleotides processively in the 3'- to 5'-direction. The sequence is that of Polyribonucleotide nucleotidyltransferase from Enterobacter sp. (strain 638).